Here is a 310-residue protein sequence, read N- to C-terminus: Aspartate carbamoyltransferase catalytic subunit (310 aa).

Carbamoyl phosphate-binding residues include R58 and T59. Position 86 (K86) interacts with L-aspartate. Residues R108, H137, and Q140 each coordinate carbamoyl phosphate. Residues R170 and R225 each coordinate L-aspartate. Carbamoyl phosphate-binding residues include G264 and P265.

It belongs to the aspartate/ornithine carbamoyltransferase superfamily. ATCase family. In terms of assembly, heterododecamer (2C3:3R2) of six catalytic PyrB chains organized as two trimers (C3), and six regulatory PyrI chains organized as three dimers (R2).

It catalyses the reaction carbamoyl phosphate + L-aspartate = N-carbamoyl-L-aspartate + phosphate + H(+). It functions in the pathway pyrimidine metabolism; UMP biosynthesis via de novo pathway; (S)-dihydroorotate from bicarbonate: step 2/3. In terms of biological role, catalyzes the condensation of carbamoyl phosphate and aspartate to form carbamoyl aspartate and inorganic phosphate, the committed step in the de novo pyrimidine nucleotide biosynthesis pathway. The chain is Aspartate carbamoyltransferase catalytic subunit from Coxiella burnetii (strain CbuG_Q212) (Coxiella burnetii (strain Q212)).